A 340-amino-acid polypeptide reads, in one-letter code: Cytoskeleton protein RodZ (340 aa).

Over 1–111 (MNTEATQEKS…LGKQRKKRDG (111 aa)) the chain is Cytoplasmic. The 61-residue stretch at 19–79 (LRTAREQMGL…RLVHVPEEEL (61 aa)) folds into the HTH cro/C1-type domain. Residues 30–49 (QQNVAERLCLKLSTIRDIEE) constitute a DNA-binding region (H-T-H motif). A helical; Signal-anchor for type II membrane protein transmembrane segment spans residues 112–132 (WLMIFTWLVLFVVLGLTGAWW). The Periplasmic portion of the chain corresponds to 133–340 (WQNHKAAQDD…QVARLTVGAP (208 aa)). Positions 162 to 252 (ALSDDNANGG…AAPLPTGSAA (91 aa)) are disordered. Positions 183-201 (ATANNAPSSVTATSDNGTP) are enriched in polar residues. Positions 202-233 (AATAQSSQVTASNAAPAANAVNDNTPPVAVAP) are enriched in low complexity.

The protein belongs to the RodZ family.

It localises to the cell inner membrane. Cytoskeletal protein that is involved in cell-shape control through regulation of the length of the long axis. The sequence is that of Cytoskeleton protein RodZ from Erwinia tasmaniensis (strain DSM 17950 / CFBP 7177 / CIP 109463 / NCPPB 4357 / Et1/99).